Reading from the N-terminus, the 2462-residue chain is Piezo-type mechanosensitive ion channel homolog (2462 aa).

Transmembrane regions (helical) follow at residues 5–25 (LVGF…WSVI), 27–47 (FLDL…GYRF), 57–77 (IFIF…IWAA), 105–125 (TVMY…ADIY), 163–183 (AVQL…FFIG), 207–227 (LYIY…PINF), 248–268 (EGPD…LSYV), 325–345 (FFTY…FHFA), 347–367 (LCAF…PSLF), 374–394 (GLLL…NVAF), 404–424 (FGLG…FLYL), 467–487 (LIFL…IFFL), 502–522 (SLIL…IDLV), 554–574 (IALL…LFSF), 653–673 (VYLV…LLWI), 694–714 (AVLV…QLWL), 730–750 (APLL…QLYS), 792–812 (FYAS…GLVI), and 826–846 (SFLI…LWGM). The segment at 927–947 (ASVSSSNGENPSSTDHASISM) is disordered. Positions 928–939 (SVSSSNGENPSS) are enriched in low complexity. The next 8 membrane-spanning stretches (helical) occupy residues 1027 to 1047 (FWIE…ALLL), 1050 to 1070 (FALL…CVLL), 1078 to 1098 (LWPV…VATW), 1143 to 1160 (TLIS…KLRA), 1204 to 1224 (LYCY…TGTL), 1228 to 1248 (ILHL…LEIL), 1260 to 1280 (VYNF…VGNF), and 1310 to 1330 (SALV…MFSS). Residues 1347-1400 (AIVREQEKKAARKTEQLQQIREAEEKKRQRNLQVEKMKSEMLNLRVQLHRMNSD) are a coiled coil. The tract at residues 1543–1583 (SDTNEQSSVDDEVYDEMESQKRKHTPFERSTSLQSDRSSDG) is disordered. A compositionally biased stretch (acidic residues) spans 1550–1559 (SVDDEVYDEM). Residues 1570–1583 (ERSTSLQSDRSSDG) are compositionally biased toward polar residues. Helical transmembrane passes span 1611–1631 (FIIA…AALF), 1647–1667 (VIML…QIII), 1916–1936 (YIFG…QSVI), 1956–1976 (FVII…IYLC), 1984–2004 (VYYL…AWSI), 2012–2032 (AGLA…LQAI), 2130–2150 (GICL…MYSS), and 2369–2389 (FLGD…FVLA).

Belongs to the PIEZO (TC 1.A.75) family.

The protein resides in the membrane. In terms of biological role, pore-forming subunit of a mechanosensitive non-specific cation channel, that conducts both sodium and potassium ions. The protein is Piezo-type mechanosensitive ion channel homolog of Arabidopsis thaliana (Mouse-ear cress).